Reading from the N-terminus, the 82-residue chain is MTRILLLLLRFYQYFISPLLGNNCRFHPTCSEYAKEAISMHGSIKGLWFTFKRIIKCQPFCDGGYDTVPISIKNSKPLNKKI.

Belongs to the UPF0161 family.

It is found in the cell inner membrane. Could be involved in insertion of integral membrane proteins into the membrane. The sequence is that of Putative membrane protein insertion efficiency factor from Rickettsia rickettsii (strain Iowa).